Reading from the N-terminus, the 234-residue chain is Ankyrin repeat-containing protein C6C3.08 (234 aa).

5 ANK repeats span residues 36 to 66 (DKRTPLHWACSVGKVNTIYFLLKQPNIKPDE), 70 to 100 (AGWTPLMISINNRSVPDNVIEELINRSDVDP), 106 to 135 (GGQTCLHYAAGKGRLSIVQLLCDKAPELIR), 140 to 169 (QGQTPLHRAAAVGKIQVVKYLISQRAPLNT), and 173 to 203 (YGFTPLHFALAEGHPDVGVELVRAGADTLRK).

The sequence is that of Ankyrin repeat-containing protein C6C3.08 from Schizosaccharomyces pombe (strain 972 / ATCC 24843) (Fission yeast).